Here is a 259-residue protein sequence, read N- to C-terminus: Flagellar L-ring protein (259 aa).

The first 15 residues, 1 to 15 (MKRISLIALVTIMSG), serve as a signal peptide directing secretion. Cys-16 carries the N-palmitoyl cysteine lipid modification. Cys-16 is lipidated: S-diacylglycerol cysteine.

This sequence belongs to the FlgH family. The basal body constitutes a major portion of the flagellar organelle and consists of four rings (L,P,S, and M) mounted on a central rod.

The protein resides in the cell outer membrane. The protein localises to the bacterial flagellum basal body. Assembles around the rod to form the L-ring and probably protects the motor/basal body from shearing forces during rotation. This chain is Flagellar L-ring protein, found in Vibrio vulnificus (strain CMCP6).